A 392-amino-acid polypeptide reads, in one-letter code: DNA-directed RNA polymerase subunit Rpo1C (392 aa).

This sequence belongs to the RNA polymerase beta' chain family. As to quaternary structure, part of the RNA polymerase complex.

The protein localises to the cytoplasm. It catalyses the reaction RNA(n) + a ribonucleoside 5'-triphosphate = RNA(n+1) + diphosphate. DNA-dependent RNA polymerase (RNAP) catalyzes the transcription of DNA into RNA using the four ribonucleoside triphosphates as substrates. Forms part of the jaw domain. This Sulfurisphaera tokodaii (strain DSM 16993 / JCM 10545 / NBRC 100140 / 7) (Sulfolobus tokodaii) protein is DNA-directed RNA polymerase subunit Rpo1C.